A 300-amino-acid chain; its full sequence is GTPase Era (300 aa).

The region spanning 5–172 is the Era-type G domain; the sequence is HSGFVAIIGR…LTALTDALPV (168 aa). A G1 region spans residues 13–20; it reads GRPNVGKS. Position 13–20 (13–20) interacts with GTP; it reads GRPNVGKS. Residues 39-43 form a G2 region; the sequence is QTTRN. Residues 60–63 are G3; it reads DTPG. GTP contacts are provided by residues 60 to 64 and 122 to 125; these read DTPGI and NKID. The interval 122–125 is G4; the sequence is NKID. The interval 151–153 is G5; that stretch reads ISA. Positions 203-280 constitute a KH type-2 domain; sequence TRDEVPHAVA…NLKLWVRVQK (78 aa).

The protein belongs to the TRAFAC class TrmE-Era-EngA-EngB-Septin-like GTPase superfamily. Era GTPase family. As to quaternary structure, monomer.

The protein resides in the cytoplasm. It is found in the cell membrane. Its function is as follows. An essential GTPase that binds both GDP and GTP, with rapid nucleotide exchange. Plays a role in 16S rRNA processing and 30S ribosomal subunit biogenesis and possibly also in cell cycle regulation and energy metabolism. This Lacticaseibacillus paracasei (strain ATCC 334 / BCRC 17002 / CCUG 31169 / CIP 107868 / KCTC 3260 / NRRL B-441) (Lactobacillus paracasei) protein is GTPase Era.